The following is a 50-amino-acid chain: Defensin-like protein 1 (50 aa).

4 disulfides stabilise this stretch: C2–C50, C14–C35, C20–C44, and C24–C46.

It belongs to the DEFL family.

It is found in the secreted. Functionally, possesses antimicrobial activity sensitive to inorganic cations. Binds specifically to the fungal plasma membrane. Has no inhibitory effect on insect gut alpha-amylase. This Aesculus hippocastanum (Horse chestnut) protein is Defensin-like protein 1.